Consider the following 51-residue polypeptide: ATP synthase F(1) complex subunit epsilon, mitochondrial (51 aa).

Lysine 21, lysine 32, and lysine 37 each carry N6-acetyllysine; alternate. An N6-succinyllysine; alternate mark is found at lysine 21, lysine 32, and lysine 37. N6-acetyllysine is present on lysine 44.

This sequence belongs to the eukaryotic ATPase epsilon family. Component of the ATP synthase complex composed at least of ATP5F1A/subunit alpha, ATP5F1B/subunit beta, ATP5MC1/subunit c (homooctomer), MT-ATP6/subunit a, MT-ATP8/subunit 8, ATP5ME/subunit e, ATP5MF/subunit f, ATP5MG/subunit g, ATP5MK/subunit k, ATP5MJ/subunit j, ATP5F1C/subunit gamma, ATP5F1D/subunit delta, ATP5F1E/subunit epsilon, ATP5PF/subunit F6, ATP5PB/subunit b, ATP5PD/subunit d, ATP5PO/subunit OSCP. ATP synthase complex consists of a soluble F(1) head domain (subunits alpha(3) and beta(3)) - the catalytic core - and a membrane F(0) domain - the membrane proton channel (subunits c, a, 8, e, f, g, k and j). These two domains are linked by a central stalk (subunits gamma, delta, and epsilon) rotating inside the F1 region and a stationary peripheral stalk (subunits F6, b, d, and OSCP). As to expression, ubiquitous.

The protein localises to the mitochondrion. The protein resides in the mitochondrion inner membrane. Functionally, subunit epsilon, of the mitochondrial membrane ATP synthase complex (F(1)F(0) ATP synthase or Complex V) that produces ATP from ADP in the presence of a proton gradient across the membrane which is generated by electron transport complexes of the respiratory chain. ATP synthase complex consist of a soluble F(1) head domain - the catalytic core - and a membrane F(1) domain - the membrane proton channel. These two domains are linked by a central stalk rotating inside the F(1) region and a stationary peripheral stalk. During catalysis, ATP synthesis in the catalytic domain of F(1) is coupled via a rotary mechanism of the central stalk subunits to proton translocation. In vivo, can only synthesize ATP although its ATP hydrolase activity can be activated artificially in vitro. May be essential for the assembly of F(1) and may play an important role in the incorporation of the hydrophobic subunit c into the F(1)-c oligomer rotor of the mitochondrial ATP synthase complex. The chain is ATP synthase F(1) complex subunit epsilon, mitochondrial from Homo sapiens (Human).